Here is a 205-residue protein sequence, read N- to C-terminus: Holliday junction branch migration complex subunit RuvA (205 aa).

The segment at 1-64 (MIGRLRGIIL…EDAQLLFGFN (64 aa)) is domain I. The domain II stretch occupies residues 65–142 (DKQERALFRE…KGLSGDLFNP (78 aa)). Residues 143 to 156 (VSDIPLASPASAES) are flexible linker. The interval 157–205 (RASDPEAEAAAALVALGYKPQEASRMISKIARPEADCETLIRDALRAAL) is domain III.

The protein belongs to the RuvA family. In terms of assembly, homotetramer. Forms an RuvA(8)-RuvB(12)-Holliday junction (HJ) complex. HJ DNA is sandwiched between 2 RuvA tetramers; dsDNA enters through RuvA and exits via RuvB. An RuvB hexamer assembles on each DNA strand where it exits the tetramer. Each RuvB hexamer is contacted by two RuvA subunits (via domain III) on 2 adjacent RuvB subunits; this complex drives branch migration. In the full resolvosome a probable DNA-RuvA(4)-RuvB(12)-RuvC(2) complex forms which resolves the HJ.

Its subcellular location is the cytoplasm. Its function is as follows. The RuvA-RuvB-RuvC complex processes Holliday junction (HJ) DNA during genetic recombination and DNA repair, while the RuvA-RuvB complex plays an important role in the rescue of blocked DNA replication forks via replication fork reversal (RFR). RuvA specifically binds to HJ cruciform DNA, conferring on it an open structure. The RuvB hexamer acts as an ATP-dependent pump, pulling dsDNA into and through the RuvAB complex. HJ branch migration allows RuvC to scan DNA until it finds its consensus sequence, where it cleaves and resolves the cruciform DNA. The sequence is that of Holliday junction branch migration complex subunit RuvA from Pectobacterium carotovorum subsp. carotovorum (strain PC1).